Reading from the N-terminus, the 240-residue chain is UDP-2,3-diacylglucosamine hydrolase (240 aa).

Mn(2+)-binding residues include Asp-8, His-10, Asp-41, Asn-78, and His-113. 78–79 is a substrate binding site; it reads NR. Residues Asp-121, Ser-159, Asn-163, Lys-166, and His-194 each contribute to the substrate site. Mn(2+)-binding residues include His-194 and His-196.

The protein belongs to the LpxH family. The cofactor is Mn(2+).

The protein localises to the cell inner membrane. It carries out the reaction UDP-2-N,3-O-bis[(3R)-3-hydroxytetradecanoyl]-alpha-D-glucosamine + H2O = 2-N,3-O-bis[(3R)-3-hydroxytetradecanoyl]-alpha-D-glucosaminyl 1-phosphate + UMP + 2 H(+). Its pathway is glycolipid biosynthesis; lipid IV(A) biosynthesis; lipid IV(A) from (3R)-3-hydroxytetradecanoyl-[acyl-carrier-protein] and UDP-N-acetyl-alpha-D-glucosamine: step 4/6. Functionally, hydrolyzes the pyrophosphate bond of UDP-2,3-diacylglucosamine to yield 2,3-diacylglucosamine 1-phosphate (lipid X) and UMP by catalyzing the attack of water at the alpha-P atom. Involved in the biosynthesis of lipid A, a phosphorylated glycolipid that anchors the lipopolysaccharide to the outer membrane of the cell. The protein is UDP-2,3-diacylglucosamine hydrolase of Shewanella baltica (strain OS195).